The primary structure comprises 104 residues: MKDKKRPPSVKPLARERIAVLFSEAEKIFHENPGYSDRYVALARKISMKERVRIDHEYRRRFCHHCSRYLVPGANMRVRVHHGWVAVTCLGCKKTTRYRVERTP.

Positions 63, 66, 89, and 92 each coordinate Zn(2+).

The protein belongs to the eukaryotic/archaeal RNase P protein component 4 family. Consists of a catalytic RNA component and at least 4-5 protein subunits. Zn(2+) serves as cofactor.

The protein localises to the cytoplasm. It carries out the reaction Endonucleolytic cleavage of RNA, removing 5'-extranucleotides from tRNA precursor.. Functionally, part of ribonuclease P, a protein complex that generates mature tRNA molecules by cleaving their 5'-ends. This chain is Ribonuclease P protein component 4, found in Methanoregula boonei (strain DSM 21154 / JCM 14090 / 6A8).